Reading from the N-terminus, the 852-residue chain is MLGPAVLGLSLWALLQPGAGAPLCLSQQLRMKGDYMLGGLFPLGEAEEAGFRSRTRPSSPVCTRFSSNGLLWALAMKMAVEEINNKSDLLPGLRLGYDLFDTCSEPVVAMKPSLMFLAKAGSRDIAAYCNYTQYQPRVLAVIGPHSSELAMVTGKFFSFFLMPQVSYGASMELLSARETFPSFFRTVPSDRVQLTAAAELLQEFGWNWVAALGSDDEYGRQGLSIFSALAAARGICIAHEGLVPLPRADDSRLGKVQDVLHQVNQSSVQVVLLFASVHAAHALFNYSISSRLSPKVWVASEAWLTSDLVMGLPGMAQMGTVLGFLQRGAQLHEFPQYVKTHLALAADPAFCSALGEREQGLEEDVVGQRCPQCDCITLQNVSAGLNHHQTFSVYAAVYSVAQALHNTLQCNASGCPAQDPVKPWQLLENMYNLTFHAGGLMLRFDSSGNVDMEYDLKLWVWQGSVPRLHDVGRFNGSLRTERLKIRWHTSDNQKPVSRCSRQCQEGQVRRVKGFHSCCYDCVDCEAGSYRQNPDDVTCTSCGQDEWSPERSTRCFHRRSRFLAWGEPAVLLLLLLLSLALGLVLAALGLFVHHRDSPLVQASGGPLACFGLVCLGLVCLSVLLFPGQPSPAQCLAQQPLSHLPLTGCLSTLFLQAAEIFVESELPLSWADRLSGCLRGPWAWLVVLLAMLVEVALCTWYLVAFPPEVVTDWHMLPTEALVHCRTRSWVSFGLAHATNATLAFLCFLGTFLVRSQPGRYNRARGLTFAMLAYFITWVSFVPLLANVQVVLRPAVQMGALLLCVLGILAAFHLPRCYLLIRQPGLNTPEFFLGGGPGDAQGRNDGDTGNQGKHE.

The N-terminal stretch at 1 to 20 (MLGPAVLGLSLWALLQPGAG) is a signal peptide. Residues 21–570 (APLCLSQQLR…FLAWGEPAVL (550 aa)) lie on the Extracellular side of the membrane. N85, N130, N264, N285, N380, N411, N432, and N475 each carry an N-linked (GlcNAc...) asparagine glycan. Residues 571–591 (LLLLLLSLALGLVLAALGLFV) traverse the membrane as a helical segment. Residues 592 to 603 (HHRDSPLVQASG) are Cytoplasmic-facing. The chain crosses the membrane as a helical span at residues 604–624 (GPLACFGLVCLGLVCLSVLLF). Topologically, residues 625–639 (PGQPSPAQCLAQQPL) are extracellular. Residues 640-660 (SHLPLTGCLSTLFLQAAEIFV) form a helical membrane-spanning segment. Topologically, residues 661 to 682 (ESELPLSWADRLSGCLRGPWAW) are cytoplasmic. A helical membrane pass occupies residues 683 to 703 (LVVLLAMLVEVALCTWYLVAF). The Extracellular portion of the chain corresponds to 704–729 (PPEVVTDWHMLPTEALVHCRTRSWVS). The helical transmembrane segment at 730-750 (FGLAHATNATLAFLCFLGTFL) threads the bilayer. Topologically, residues 751–762 (VRSQPGRYNRAR) are cytoplasmic. The chain crosses the membrane as a helical span at residues 763-783 (GLTFAMLAYFITWVSFVPLLA). Residues 784-791 (NVQVVLRP) lie on the Extracellular side of the membrane. The helical transmembrane segment at 792 to 812 (AVQMGALLLCVLGILAAFHLP) threads the bilayer. Over 813–852 (RCYLLIRQPGLNTPEFFLGGGPGDAQGRNDGDTGNQGKHE) the chain is Cytoplasmic. The segment at 833-852 (GPGDAQGRNDGDTGNQGKHE) is disordered. The segment covering 839 to 852 (GRNDGDTGNQGKHE) has biased composition (basic and acidic residues).

The protein belongs to the G-protein coupled receptor 3 family. TAS1R subfamily. As to quaternary structure, forms homodimers or heterodimers with TAS1R1 and TAS1R2.

It localises to the cell membrane. Functionally, putative taste receptor. TAS1R1/TAS1R3 responds to the umami taste stimulus (the taste of monosodium glutamate). TAS1R2/TAS1R3 recognizes diverse natural and synthetic sweeteners. TAS1R3 is essential for the recognition and response to the disaccharide trehalose. Sequence differences within and between species can significantly influence the selectivity and specificity of taste responses. This Gorilla gorilla gorilla (Western lowland gorilla) protein is Taste receptor type 1 member 3 (TAS1R3).